The following is a 215-amino-acid chain: MPDTARDRLADARVYLCTDARRRQGDLAEFLDAALAGGVDIVQLRDKGMEAAEELEHLQVFADACRRHGKLLAVNDRADVAHAVDSDVLHLGQGDLPVPAARAILGADVLIGRSTHAEAEAEAAAVQEGVDYFCTGPCWPTPTKPGRHAPGLDLVRHTAALGTDRPWFAIGGIDLGNLDEVLEAGARRVVVVRAITEADDPKAAAEEFAKRLRHA.

4-amino-2-methyl-5-(diphosphooxymethyl)pyrimidine is bound by residues glutamine 43–lysine 47 and asparagine 75. The Mg(2+) site is built by aspartate 76 and aspartate 95. Serine 114 is a 4-amino-2-methyl-5-(diphosphooxymethyl)pyrimidine binding site. Threonine 141–threonine 143 provides a ligand contact to 2-[(2R,5Z)-2-carboxy-4-methylthiazol-5(2H)-ylidene]ethyl phosphate. Lysine 144 serves as a coordination point for 4-amino-2-methyl-5-(diphosphooxymethyl)pyrimidine. 2-[(2R,5Z)-2-carboxy-4-methylthiazol-5(2H)-ylidene]ethyl phosphate is bound at residue glycine 172.

This sequence belongs to the thiamine-phosphate synthase family. The cofactor is Mg(2+).

The catalysed reaction is 2-[(2R,5Z)-2-carboxy-4-methylthiazol-5(2H)-ylidene]ethyl phosphate + 4-amino-2-methyl-5-(diphosphooxymethyl)pyrimidine + 2 H(+) = thiamine phosphate + CO2 + diphosphate. The enzyme catalyses 2-(2-carboxy-4-methylthiazol-5-yl)ethyl phosphate + 4-amino-2-methyl-5-(diphosphooxymethyl)pyrimidine + 2 H(+) = thiamine phosphate + CO2 + diphosphate. It catalyses the reaction 4-methyl-5-(2-phosphooxyethyl)-thiazole + 4-amino-2-methyl-5-(diphosphooxymethyl)pyrimidine + H(+) = thiamine phosphate + diphosphate. It functions in the pathway cofactor biosynthesis; thiamine diphosphate biosynthesis; thiamine phosphate from 4-amino-2-methyl-5-diphosphomethylpyrimidine and 4-methyl-5-(2-phosphoethyl)-thiazole: step 1/1. Its function is as follows. Condenses 4-methyl-5-(beta-hydroxyethyl)thiazole monophosphate (THZ-P) and 2-methyl-4-amino-5-hydroxymethyl pyrimidine pyrophosphate (HMP-PP) to form thiamine monophosphate (TMP). This Streptomyces avermitilis (strain ATCC 31267 / DSM 46492 / JCM 5070 / NBRC 14893 / NCIMB 12804 / NRRL 8165 / MA-4680) protein is Thiamine-phosphate synthase.